A 536-amino-acid chain; its full sequence is REST corepressor 2 (536 aa).

The disordered stretch occupies residues 1-44 (MERSGSGVLSRSRAKTVTNGNSQHSEEESSDEEHPNDSMIRVGG). Positions 24 to 36 (HSEEESSDEEHPN) are enriched in basic and acidic residues. Residues 38–123 (SMIRVGGDYQ…KSLADLANFT (86 aa)) form the ELM2 domain. The region spanning 124-175 (PFPDEWTVEDKVLFEQAFSFHGKSFHRIQQMLPDKMITSLVKYYYSWKKTRT) is the SANT 1 domain. The segment at 179-264 (VMDRQARKLL…RARRRPPKGM (86 aa)) is disordered. A compositionally biased stretch (acidic residues) spans 197-211 (NDEIEEGDPGSDSDF). A compositionally biased stretch (basic residues) spans 249 to 262 (YRHHPLRARRRPPK). The stretch at 283–315 (VTIRQLDTQLVSLKRQVQKIKQTNSVLRNNLGD) forms a coiled coil. The SANT 2 domain maps to 328–379 (KINSRWTTEEQLLAVQAVRRYGKDFAAIADVIGNKTVAQVSSFFVSYRRRFN). The disordered stretch occupies residues 389-536 (AEQEVQGSSG…GLKVESPQSH (148 aa)). A compositionally biased stretch (polar residues) spans 391-406 (QEVQGSSGRTVNTELN). Low complexity predominate over residues 422-449 (SPPHSDSPLPSSEGSASGNHSSAQSSPP). Pro residues predominate over residues 450-476 (LTQPPPLLRPAPPSAPPSLLRQPPPLQ).

Belongs to the CoREST family.

It localises to the nucleus. In terms of biological role, may act as a component of a corepressor complex that represses transcription. This is REST corepressor 2 (rcor2) from Danio rerio (Zebrafish).